We begin with the raw amino-acid sequence, 158 residues long: E3 ubiquitin ligase complex SCF subunit sconC (158 aa).

The tract at residues 100–158 is interaction with the F-box domain of F-box proteins; it reads ILAANYLDIKALLDVGCKTVANMIKGKSPEEIRKTFNIQNDFTPEEEDQIRRENEWAEE.

It belongs to the SKP1 family. Component of the SCF (SKP1-CUL1-F-box protein) E3 ubiquitin ligase complexes.

It functions in the pathway protein modification; protein ubiquitination. Its function is as follows. Essential component of the SCF (SKP1-CUL1-F-box protein) E3 ubiquitin ligase complexes, which mediate the ubiquitination and subsequent proteasomal degradation of target proteins. Controls sulfur metabolite repression, probably by mediating the inactivation or degradation of the metR transcription factor. In Aspergillus fumigatus (strain CBS 144.89 / FGSC A1163 / CEA10) (Neosartorya fumigata), this protein is E3 ubiquitin ligase complex SCF subunit sconC (sconC).